The sequence spans 187 residues: Ras-like protein rasD (187 aa).

10–17 serves as a coordination point for GTP; it reads GGGGVGKS. Positions 32–40 match the Effector region motif; that stretch reads YDPTIEDSY. Residues 57–61 and 116–119 contribute to the GTP site; these read DTAGQ and NKAD. C184 carries the post-translational modification Cysteine methyl ester. C184 carries S-geranylgeranyl cysteine lipidation. Positions 185–187 are cleaved as a propeptide — removed in mature form; that stretch reads LIL.

This sequence belongs to the small GTPase superfamily. Ras family.

The protein resides in the cell membrane. It carries out the reaction GTP + H2O = GDP + phosphate + H(+). Alternates between an inactive form bound to GDP and an active form bound to GTP. Activated by a guanine nucleotide-exchange factor (GEF) and inactivated by a GTPase-activating protein (GAP). Functionally, ras proteins bind GDP/GTP and possess intrinsic GTPase activity. This chain is Ras-like protein rasD (rasD), found in Dictyostelium discoideum (Social amoeba).